A 247-amino-acid chain; its full sequence is Probable cyclic nucleotide phosphodiesterase XBJ1_0953 (247 aa).

D8, H10, D52, N82, H154, H192, and H194 together coordinate Fe cation. AMP-binding positions include H10, D52, and N82 to H83. AMP is bound at residue H194.

The protein belongs to the cyclic nucleotide phosphodiesterase class-III family. The cofactor is Fe(2+).

In Xenorhabdus bovienii (strain SS-2004) (Xenorhabdus nematophila subsp. bovienii), this protein is Probable cyclic nucleotide phosphodiesterase XBJ1_0953.